The chain runs to 1429 residues: Autophagy-related protein 11 (1429 aa).

Residues threonine 71 to serine 99 form a disordered region. A compositionally biased stretch (low complexity) spans serine 80 to proline 89. Coiled coils occupy residues valine 143 to serine 173, aspartate 553 to alanine 590, leucine 632 to isoleucine 815, and glutamate 851 to serine 989. The segment at aspartate 1024–asparagine 1061 is disordered. The segment covering threonine 1042 to asparagine 1061 has biased composition (low complexity). Residues alanine 1105–lysine 1143 are a coiled coil. Over residues serine 1209–threonine 1229 the composition is skewed to basic and acidic residues. Disordered stretches follow at residues serine 1209–phenylalanine 1241 and serine 1336–proline 1429. Residues glutamate 1230–asparagine 1239 show a composition bias toward acidic residues. Composition is skewed to polar residues over residues alanine 1345–serine 1372 and glutamine 1383–serine 1393.

This sequence belongs to the ATG11 family. As to quaternary structure, homodimer.

The protein resides in the preautophagosomal structure membrane. It localises to the vacuole membrane. Functionally, involved in cytoplasm to vacuole transport (Cvt), pexophagy, mitophagy and nucleophagy. Recruits mitochondria for their selective degradation via autophagy (mitophagy) during starvation. Works as scaffold proteins that recruit ATG proteins to the pre-autophagosome (PAS), the site of vesicle/autophagosome formation. Required for the Cvt vesicles completion. This Neurospora crassa (strain ATCC 24698 / 74-OR23-1A / CBS 708.71 / DSM 1257 / FGSC 987) protein is Autophagy-related protein 11 (apg-8).